The chain runs to 668 residues: DNA ligase (668 aa).

NAD(+) is bound by residues 37–41, 86–87, and Glu-116; these read DNVYD and SM. The active-site N6-AMP-lysine intermediate is the Lys-118. Residues Arg-139, Glu-173, Lys-288, and Lys-312 each contribute to the NAD(+) site. The Zn(2+) site is built by Cys-406, Cys-409, Cys-424, and Cys-429. The 78-residue stretch at 591-668 folds into the BRCT domain; the sequence is APDNPFKDKT…TEEEAIAQIE (78 aa).

It belongs to the NAD-dependent DNA ligase family. LigA subfamily. Requires Mg(2+) as cofactor. Mn(2+) is required as a cofactor.

The catalysed reaction is NAD(+) + (deoxyribonucleotide)n-3'-hydroxyl + 5'-phospho-(deoxyribonucleotide)m = (deoxyribonucleotide)n+m + AMP + beta-nicotinamide D-nucleotide.. DNA ligase that catalyzes the formation of phosphodiester linkages between 5'-phosphoryl and 3'-hydroxyl groups in double-stranded DNA using NAD as a coenzyme and as the energy source for the reaction. It is essential for DNA replication and repair of damaged DNA. This Lactobacillus helveticus (strain DPC 4571) protein is DNA ligase.